The sequence spans 128 residues: Phosphoribosyl-AMP cyclohydrolase (128 aa).

Residue D77 coordinates Mg(2+). C78 lines the Zn(2+) pocket. Mg(2+)-binding residues include D79 and D81. The Zn(2+) site is built by C94 and C101.

It belongs to the PRA-CH family. Homodimer. It depends on Mg(2+) as a cofactor. The cofactor is Zn(2+).

Its subcellular location is the cytoplasm. The enzyme catalyses 1-(5-phospho-beta-D-ribosyl)-5'-AMP + H2O = 1-(5-phospho-beta-D-ribosyl)-5-[(5-phospho-beta-D-ribosylamino)methylideneamino]imidazole-4-carboxamide. The protein operates within amino-acid biosynthesis; L-histidine biosynthesis; L-histidine from 5-phospho-alpha-D-ribose 1-diphosphate: step 3/9. Its function is as follows. Catalyzes the hydrolysis of the adenine ring of phosphoribosyl-AMP. This Granulibacter bethesdensis (strain ATCC BAA-1260 / CGDNIH1) protein is Phosphoribosyl-AMP cyclohydrolase.